A 476-amino-acid polypeptide reads, in one-letter code: Bifunctional protein HldE (476 aa).

The interval 1 to 318 (MLSKKPNILV…EYESSLHKSN (318 aa)) is ribokinase. Position 195 to 198 (195 to 198 (NKKE)) interacts with ATP. D263 is an active-site residue. Residues 345-476 (FTNGCFDILH…RIQENEKCNN (132 aa)) form a cytidylyltransferase region.

It in the N-terminal section; belongs to the carbohydrate kinase PfkB family. The protein in the C-terminal section; belongs to the cytidylyltransferase family. In terms of assembly, homodimer.

It carries out the reaction D-glycero-beta-D-manno-heptose 7-phosphate + ATP = D-glycero-beta-D-manno-heptose 1,7-bisphosphate + ADP + H(+). The catalysed reaction is D-glycero-beta-D-manno-heptose 1-phosphate + ATP + H(+) = ADP-D-glycero-beta-D-manno-heptose + diphosphate. It participates in nucleotide-sugar biosynthesis; ADP-L-glycero-beta-D-manno-heptose biosynthesis; ADP-L-glycero-beta-D-manno-heptose from D-glycero-beta-D-manno-heptose 7-phosphate: step 1/4. The protein operates within nucleotide-sugar biosynthesis; ADP-L-glycero-beta-D-manno-heptose biosynthesis; ADP-L-glycero-beta-D-manno-heptose from D-glycero-beta-D-manno-heptose 7-phosphate: step 3/4. Functionally, catalyzes the phosphorylation of D-glycero-D-manno-heptose 7-phosphate at the C-1 position to selectively form D-glycero-beta-D-manno-heptose-1,7-bisphosphate. Catalyzes the ADP transfer from ATP to D-glycero-beta-D-manno-heptose 1-phosphate, yielding ADP-D-glycero-beta-D-manno-heptose. The sequence is that of Bifunctional protein HldE from Aliarcobacter butzleri (strain RM4018) (Arcobacter butzleri).